An 825-amino-acid chain; its full sequence is Heterogeneous nuclear ribonucleoprotein U (825 aa).

Ser-2 carries the N-acetylserine; partial modification. Ser-4 is modified (phosphoserine). Residues 8-42 enclose the SAP domain; sequence VKKLKVSELKEELKKRRLSDKGLKAELMERLQAAL. 2 positions are modified to N6-acetyllysine: Lys-17 and Lys-21. The segment at 41 to 281 is disordered; the sequence is ALDDEEAGGR…PQPPVEEEDE (241 aa). Ser-59 carries the post-translational modification Phosphoserine; by PLK1. Ser-66 is subject to Phosphoserine. Positions 72-81 are enriched in low complexity; sequence AGLEQEAAAG. 3 stretches are compositionally biased toward acidic residues: residues 82 to 95, 120 to 134, and 140 to 153; these read GDEE…EEEG, PMEE…ENGD, and EGED…EGAG. Positions 159–178 are enriched in low complexity; that stretch reads GEQQPQPPATQQQQPQQQRG. Lys-186 bears the N6-acetyllysine mark. Ser-187 carries the post-translational modification ADP-ribosylserine. The segment covering 199–211 has biased composition (low complexity); the sequence is APPGARQGQQQAG. At Lys-215 the chain carries N6-acetyllysine. Basic and acidic residues predominate over residues 233–266; the sequence is GKTEQKGGDKKRGVKRPREDHGRGYFEYIEENKY. Arg-255 carries the post-translational modification Citrulline. Residue Lys-265 is modified to N6-acetyllysine; alternate. Lys-265 is covalently cross-linked (Glycyl lysine isopeptide (Lys-Gly) (interchain with G-Cter in SUMO1); alternate). A Glycyl lysine isopeptide (Lys-Gly) (interchain with G-Cter in SUMO2); alternate cross-link involves residue Lys-265. Tyr-266 is modified (phosphotyrosine). Phosphoserine occurs at positions 267 and 271. The B30.2/SPRY domain occupies 267–464; that stretch reads SRAKSPQPPV…VEFNFGQKEK (198 aa). Phosphothreonine is present on Thr-286. Lys-352 carries the N6-acetyllysine modification. The segment at 488-672 is ATPase domain; that stretch reads PKGPEEKKDC…QKLLEQYKEE (185 aa). A Glycyl lysine isopeptide (Lys-Gly) (interchain with G-Cter in SUMO2) cross-link involves residue Lys-495. 504–511 contacts ATP; that stretch reads GLPGAGKT. 2 positions are modified to N6-acetyllysine; alternate: Lys-516 and Lys-524. Glycyl lysine isopeptide (Lys-Gly) (interchain with G-Cter in SUMO2); alternate cross-links involve residues Lys-516 and Lys-524. The residue at position 532 (Thr-532) is a Phosphothreonine. Lys-536 is covalently cross-linked (Glycyl lysine isopeptide (Lys-Gly) (interchain with G-Cter in SUMO2)). N6-acetyllysine is present on Lys-551. Position 565 is an N6-acetyllysine; alternate (Lys-565). Residue Lys-565 forms a Glycyl lysine isopeptide (Lys-Gly) (interchain with G-Cter in SUMO2); alternate linkage. Lys-574 is covalently cross-linked (Glycyl lysine isopeptide (Lys-Gly) (interchain with G-Cter in SUMO2)). Residue Thr-582 is modified to Phosphothreonine. Glycyl lysine isopeptide (Lys-Gly) (interchain with G-Cter in SUMO2) cross-links involve residues Lys-609 and Lys-626. The tract at residues 611–626 is actin-binding; that stretch reads EDYKQRTQKKAEVEGK. Lys-635 is subject to N6-acetyllysine; alternate. Lys-635 is covalently cross-linked (Glycyl lysine isopeptide (Lys-Gly) (interchain with G-Cter in SUMO2); alternate). Glycyl lysine isopeptide (Lys-Gly) (interchain with G-Cter in SUMO2) cross-links involve residues Lys-664 and Lys-670. Basic and acidic residues predominate over residues 671–683; that stretch reads EESKKALPPEKKQ. The disordered stretch occupies residues 671–749; that stretch reads EESKKALPPE…GGGGGGSGGI (79 aa). At Arg-702 the chain carries Omega-N-methylarginine. Gly residues predominate over residues 710–728; sequence GGFNMRGGNFRGGAPGNRG. An RNA-binding RGG-box region spans residues 714–739; that stretch reads MRGGNFRGGAPGNRGGYNRRGNMPQR. 3 positions are modified to asymmetric dimethylarginine: Arg-715, Arg-720, and Arg-727. Residues Arg-733 and Arg-739 each carry the asymmetric dimethylarginine; alternate modification. Arg-733 and Arg-739 each carry omega-N-methylarginine; alternate. Arg-739 is subject to Dimethylated arginine; in A2780 ovarian carcinoma cell line. Positions 739-749 are enriched in gly residues; that stretch reads RGGGGGGSGGI. Residues Arg-755 and Arg-762 each carry the asymmetric dimethylarginine modification. Residues 769–799 are disordered; it reads GNYNRGGMPNRGNYNQNFRGRGNNRGYKNQS. The segment covering 778–799 has biased composition (low complexity); the sequence is NRGNYNQNFRGRGNNRGYKNQS. Lys-814 carries the post-translational modification N6-acetyllysine; alternate. Lys-814 participates in a covalent cross-link: Glycyl lysine isopeptide (Lys-Gly) (interchain with G-Cter in SUMO2); alternate.

As to quaternary structure, oligomer (via ATPase domain and RNA-binding RGG-box region); oligomerization occurs upon ATP-binding in a chromatin-associated RNAs (caRNAs)- and transcription-dependent manner and is required for chromatin decompaction. ATP hydrolysis is required to cycle from an oligomeric to monomeric state to compact chromatin. Component of the coding region determinant (CRD)-mediated complex, composed of DHX9, HNRNPU, IGF2BP1, SYNCRIP and YBX1. Identified in the spliceosome C complex. Identified in a IGF2BP1-dependent mRNP granule complex containing untranslated mRNAs. Associates with heterogeneous nuclear ribonucleoprotein (hnRNP) particles. Associates (via middle region) with the C-terminal domain (CTD) RNA polymerase II (Pol II) holoenzyme; this association occurs in a RNA-independent manner. Associates (via middle region) with the core-TFIIH basal transcription factor complex; this association inhibits the CTD phosphorylation of RNA polymerase II holoenzyme by down-regulating TFIIH kinase activity. Associates with the telomerase holoenzyme complex. Associates with spindle microtubules (MTs) in a TPX2-dependent manner. Interacts (via C-terminus) with actin; this interaction is direct and mediates association with the phosphorylated CTD of RNA polymerase II and is disrupted in presence of the long non-coding H19 RNA. Interacts with AURKA. Interacts (via C-terminus) with CBX5; this interaction is, at least in part, RNA-dependent. Interacts with CR2. Interacts with CRY1. Interacts (via C-terminus) with EP300; this interaction enhances DNA-binding to nuclear scaffold/matrix attachment region (S/MAR) elements. Interacts with ERBB4. Interacts with GEMIN5. Interacts with IGF2BP1. Interacts with IGF2BP2 and IGF2BP3. Interacts with NCL; this interaction occurs during mitosis. Interacts (via C-terminus) with NR3C1 (via C-terminus). Interacts with PLK1; this interaction induces phosphorylation of HNRNPU at Ser-59 in mitosis. Interacts with POU3F4. Interacts with SMARCA4; this interaction occurs in embryonic stem cells and stimulates global Pol II-mediated transcription. Interacts (via C-terminus) with TOP2A; this interaction protects the topoisomerase TOP2A from degradation and positively regulates the relaxation of supercoiled DNA by TOP2A in a RNA-dependent manner. Interacts with TPX2; this interaction recruits HNRNPU to spindle microtubules (MTs). Interacts with UBQLN2. Interacts (via RNA-binding RGG-box region) with ZBTB7B; the interaction facilitates the recruitment of long non-coding RNA Blnc1 by ZBTB7B. Interacts with ERCC6. In terms of assembly, (Microbial infection) Interacts with HIV-1 protein Rev. Cleaved at Asp-100 by CASP3 during T-cell apoptosis, resulting in a loss of DNA- and chromatin-binding activities. Post-translationally, extensively phosphorylated. Phosphorylated on Ser-59 by PLK1 and dephosphorylated by protein phosphatase 2A (PP2A) in mitosis. In terms of processing, arg-739 is dimethylated, probably to asymmetric dimethylarginine. Arg-733 is dimethylated, probably to asymmetric dimethylarginine. Citrullinated by PADI4. In terms of tissue distribution, widely expressed.

It is found in the nucleus. The protein localises to the nucleus matrix. The protein resides in the chromosome. It localises to the nucleus speckle. Its subcellular location is the cytoplasm. It is found in the cytoskeleton. The protein localises to the microtubule organizing center. The protein resides in the centrosome. It localises to the centromere. Its subcellular location is the kinetochore. It is found in the spindle. The protein localises to the spindle pole. The protein resides in the midbody. It localises to the cell surface. Its subcellular location is the cytoplasmic granule. Its function is as follows. DNA- and RNA-binding protein involved in several cellular processes such as nuclear chromatin organization, telomere-length regulation, transcription, mRNA alternative splicing and stability, Xist-mediated transcriptional silencing and mitotic cell progression. Plays a role in the regulation of interphase large-scale gene-rich chromatin organization through chromatin-associated RNAs (caRNAs) in a transcription-dependent manner, and thereby maintains genomic stability. Required for the localization of the long non-coding Xist RNA on the inactive chromosome X (Xi) and the subsequent initiation and maintenance of X-linked transcriptional gene silencing during X-inactivation. Plays a role as a RNA polymerase II (Pol II) holoenzyme transcription regulator. Promotes transcription initiation by direct association with the core-TFIIH basal transcription factor complex for the assembly of a functional pre-initiation complex with Pol II in a actin-dependent manner. Blocks Pol II transcription elongation activity by inhibiting the C-terminal domain (CTD) phosphorylation of Pol II and dissociates from Pol II pre-initiation complex prior to productive transcription elongation. Positively regulates CBX5-induced transcriptional gene silencing and retention of CBX5 in the nucleus. Negatively regulates glucocorticoid-mediated transcriptional activation. Key regulator of transcription initiation and elongation in embryonic stem cells upon leukemia inhibitory factor (LIF) signaling. Involved in the long non-coding RNA H19-mediated Pol II transcriptional repression. Participates in the circadian regulation of the core clock component BMAL1 transcription. Plays a role in the regulation of telomere length. Plays a role as a global pre-mRNA alternative splicing modulator by regulating U2 small nuclear ribonucleoprotein (snRNP) biogenesis. Plays a role in mRNA stability. Component of the CRD-mediated complex that promotes MYC mRNA stabilization. Enhances the expression of specific genes, such as tumor necrosis factor TNFA, by regulating mRNA stability, possibly through binding to the 3'-untranslated region (UTR). Plays a role in mitotic cell cycle regulation. Involved in the formation of stable mitotic spindle microtubules (MTs) attachment to kinetochore, spindle organization and chromosome congression. Phosphorylation at Ser-59 by PLK1 is required for chromosome alignement and segregation and progression through mitosis. Also contributes to the targeting of AURKA to mitotic spindle MTs. Binds to double- and single-stranded DNA and RNA, poly(A), poly(C) and poly(G) oligoribonucleotides. Binds to chromatin-associated RNAs (caRNAs). Associates with chromatin to scaffold/matrix attachment region (S/MAR) elements in a chromatin-associated RNAs (caRNAs)-dependent manner. Binds to the Xist RNA. Binds the long non-coding H19 RNA. Binds to SMN1/2 pre-mRNAs at G/U-rich regions. Binds to small nuclear RNAs (snRNAs). Binds to the 3'-UTR of TNFA mRNA. Binds (via RNA-binding RGG-box region) to the long non-coding Xist RNA; this binding is direct and bridges the Xist RNA and the inactive chromosome X (Xi). Also negatively regulates embryonic stem cell differentiation upon LIF signaling. Required for embryonic development. Binds to brown fat long non-coding RNA 1 (Blnc1); facilitates the recruitment of Blnc1 by ZBTB7B required to drive brown and beige fat development and thermogenesis. In terms of biological role, (Microbial infection) Negatively regulates immunodeficiency virus type 1 (HIV-1) replication by preventing the accumulation of viral mRNA transcripts in the cytoplasm. The chain is Heterogeneous nuclear ribonucleoprotein U from Homo sapiens (Human).